The sequence spans 289 residues: Metal-staphylopine import system permease protein CntC (289 aa).

5 helical membrane-spanning segments follow: residues 13 to 33 (AVIA…APLV), 77 to 97 (LLYV…LGFL), 115 to 135 (VMLA…FGMG), 194 to 214 (IAII…GFSF), and 249 to 269 (IAIV…QIAI). One can recognise an ABC transmembrane type-1 domain in the interval 73–262 (IRPSLLYVFV…IIVMAFNFLS (190 aa)).

The protein belongs to the binding-protein-dependent transport system permease family. The complex is composed of two ATP-binding proteins (CntD and CntF), two transmembrane proteins (CntB and CntC) and a solute-binding protein (CntA).

It is found in the cell membrane. Functionally, part of the ABC transporter complex CntABCDF (Opp1) involved in the uptake of metal in complex with the metallophore staphylopine (StP). May be involved in the import of a large array of divalent metals ions such as nickel, cobalt, zinc, copper and iron. Probably responsible for the translocation of the substrate across the membrane. This is Metal-staphylopine import system permease protein CntC from Staphylococcus aureus (strain Mu50 / ATCC 700699).